A 249-amino-acid chain; its full sequence is Small ribosomal subunit protein uS4m (249 aa).

An S4 RNA-binding domain is found at 133-193 (RRLDIIIYRA…PEIVNLLRNQ (61 aa)).

This sequence belongs to the universal ribosomal protein uS4 family.

It localises to the mitochondrion. In Reclinomonas americana, this protein is Small ribosomal subunit protein uS4m (RPS4).